A 690-amino-acid chain; its full sequence is Xylosyl- and glucuronyltransferase LARGE2 (690 aa).

At 1-8 (MLPRGRPR) the chain is on the cytoplasmic side. Residues 9–29 (AMGAAVLLLLLLLVVGFFLFG) form a helical; Signal-anchor for type II membrane protein membrane-spanning segment. At 30–690 (RDPDYGLGTT…TALQQARSRA (661 aa)) the chain is on the lumenal side. N-linked (GlcNAc...) asparagine glycosylation is found at Asn-51 and Asn-78. Residues 68 to 343 (LHVAIVCAGY…FLGYDGKLLR (276 aa)) are xylosyltransferase activity. 2 residues coordinate Mn(2+): Asp-172 and Asp-174. N-linked (GlcNAc...) asparagine glycosylation occurs at Asn-202. Positions 344 to 686 (RELFGCPNQF…LKYLTALQQA (343 aa)) are glucuronyltransferase activity. 2 residues coordinate Mn(2+): Asp-492 and Asp-494.

It in the C-terminal section; belongs to the glycosyltransferase 49 family. The protein in the N-terminal section; belongs to the glycosyltransferase 8 family. This sequence belongs to the glycosyltransferase 8 family. As to quaternary structure, interacts with B4GAT1. Mn(2+) is required as a cofactor. Highly expressed in the testis and kidney, but weakly expressed in the heart and brain. Expressed during embryogenesis from 7 dpc.

It localises to the golgi apparatus membrane. It carries out the reaction 3-O-[beta-D-GlcA-(1-&gt;3)-beta-D-Xyl-(1-&gt;4)-Rib-ol-P-Rib-ol-P-3-beta-D-GalNAc-(1-&gt;3)-beta-D-GlcNAc-(1-&gt;4)-(O-6-P-alpha-D-Man)]-Thr-[protein] + UDP-alpha-D-xylose = 3-O-[alpha-D-Xyl-(1-&gt;3)-beta-D-GlcA-(1-&gt;4)-beta-D-Xyl-(1-&gt;4)-Rib-ol-P-Rib-ol-P-3-beta-D-GalNAc-(1-&gt;3)-beta-D-GlcNAc-(1-&gt;4)-(O-6-P-alpha-D-Man)]-Thr-[protein] + UDP + H(+). The catalysed reaction is 3-O-{(1-&gt;[3)-alpha-D-Xyl-(1-&gt;3)-beta-D-GlcA-(1-&gt;](n)-4)-beta-D-Xyl-(1-&gt;4)-Rib-ol-P-Rib-ol-P-3-beta-D-GalNAc-(1-&gt;3)-beta-D-GlcNAc-(1-&gt;4)-O-6-P-alpha-D-Man}-L-Thr-[protein] + UDP-alpha-D-glucuronate = 3-O-{beta-D-GlcA-(1-&gt;[3)-alpha-D-Xyl-(1-&gt;3)-beta-D-GlcA-(1-&gt;](n)-4)-beta-D-Xyl-(1-&gt;4)-Rib-ol-P-Rib-ol-P-3-beta-D-GalNAc-(1-&gt;3)-beta-D-GlcNAc-(1-&gt;4)-O-6-P-alpha-D-Man}-L-Thr-[protein] + UDP + H(+). It catalyses the reaction 3-O-{beta-D-GlcA-(1-&gt;[3)-alpha-D-Xyl-(1-&gt;3)-beta-D-GlcA-(1-&gt;](n)-4)-beta-D-Xyl-(1-&gt;4)-Rib-ol-P-Rib-ol-P-3-beta-D-GalNAc-(1-&gt;3)-beta-D-GlcNAc-(1-&gt;4)-O-6-P-alpha-D-Man}-L-Thr-[protein] + UDP-alpha-D-xylose = 3-O-{(1-&gt;[3)-alpha-D-Xyl-(1-&gt;3)-beta-D-GlcA-(1-&gt;](n+1)-4)-beta-D-Xyl-(1-&gt;4)-Rib-ol-P-Rib-ol-P-3-beta-D-GalNAc-(1-&gt;3)-beta-D-GlcNAc-(1-&gt;4)-O-6-P-alpha-D-Man}-L-Thr-[protein] + UDP + H(+). The protein operates within protein modification; protein glycosylation. Its function is as follows. Bifunctional glycosyltransferase with both alpha-1,3-xylosyltransferase and beta-1,3-glucuronyltransferase activities involved in the maturation of alpha-dystroglycan (DAG1) by glycosylation leading to DAG1 binding to laminin G-like domain-containing extracellular proteins with high affinity and in a phosphorylated-O-mannosyl trisaccharide dependent manner. Elongates the glucuronyl-beta-1,4-xylose-beta disaccharide primer structure by adding repeating units [-3-Xylose-alpha-1,3-GlcA-beta-1-] to produce a heteropolysaccharide. Supports the maturation of DAG1 more effectively than LARGE1. In addition, can modify both heparan sulfate (HS)- and chondroitin/dermatan sulfate (CS/DS)-proteoglycans (PGs), namely GPC4, with a glycosaminoglycan (GAG)-like polysaccharide composed of xylose and glucuronic acid to confer laminin binding. The polypeptide is Xylosyl- and glucuronyltransferase LARGE2 (Mus musculus (Mouse)).